An 852-amino-acid polypeptide reads, in one-letter code: Translation initiation factor IF-2 (852 aa).

The disordered stretch occupies residues Met1–Ser240. Basic and acidic residues predominate over residues Lys78–Asp90. Residues Val106–Pro120 are compositionally biased toward polar residues. Positions Arg150–Gly200 are enriched in gly residues. Positions His227 to Ser240 are enriched in basic and acidic residues. Residues Asn347–Lys516 form the tr-type G domain. Positions Gly356–Thr363 are G1. Residue Gly356–Thr363 participates in GTP binding. The segment at Gly381 to His385 is G2. Residues Asp402–Gly405 form a G3 region. Residues Asp402–His406 and Asn456–Asp459 contribute to the GTP site. Residues Asn456–Asp459 form a G4 region. The segment at Ser492–Arg494 is G5.

It belongs to the TRAFAC class translation factor GTPase superfamily. Classic translation factor GTPase family. IF-2 subfamily.

It localises to the cytoplasm. One of the essential components for the initiation of protein synthesis. Protects formylmethionyl-tRNA from spontaneous hydrolysis and promotes its binding to the 30S ribosomal subunits. Also involved in the hydrolysis of GTP during the formation of the 70S ribosomal complex. This is Translation initiation factor IF-2 from Leptospira borgpetersenii serovar Hardjo-bovis (strain JB197).